The sequence spans 365 residues: UDP-N-acetylglucosamine--N-acetylmuramyl-(pentapeptide) pyrophosphoryl-undecaprenol N-acetylglucosamine transferase (365 aa).

UDP-N-acetyl-alpha-D-glucosamine is bound by residues 19–21 (TGG), asparagine 131, arginine 170, serine 201, isoleucine 255, 274–279 (ALTVTE), and glutamine 300.

It belongs to the glycosyltransferase 28 family. MurG subfamily.

It is found in the cell inner membrane. It carries out the reaction di-trans,octa-cis-undecaprenyl diphospho-N-acetyl-alpha-D-muramoyl-L-alanyl-D-glutamyl-meso-2,6-diaminopimeloyl-D-alanyl-D-alanine + UDP-N-acetyl-alpha-D-glucosamine = di-trans,octa-cis-undecaprenyl diphospho-[N-acetyl-alpha-D-glucosaminyl-(1-&gt;4)]-N-acetyl-alpha-D-muramoyl-L-alanyl-D-glutamyl-meso-2,6-diaminopimeloyl-D-alanyl-D-alanine + UDP + H(+). It participates in cell wall biogenesis; peptidoglycan biosynthesis. Cell wall formation. Catalyzes the transfer of a GlcNAc subunit on undecaprenyl-pyrophosphoryl-MurNAc-pentapeptide (lipid intermediate I) to form undecaprenyl-pyrophosphoryl-MurNAc-(pentapeptide)GlcNAc (lipid intermediate II). This chain is UDP-N-acetylglucosamine--N-acetylmuramyl-(pentapeptide) pyrophosphoryl-undecaprenol N-acetylglucosamine transferase, found in Acinetobacter baumannii (strain ATCC 17978 / DSM 105126 / CIP 53.77 / LMG 1025 / NCDC KC755 / 5377).